The chain runs to 182 residues: A-type ATP synthase subunit E (182 aa).

This sequence belongs to the V-ATPase E subunit family. In terms of assembly, has multiple subunits with at least A(3), B(3), C, D, E, F, H, I and proteolipid K(x).

The protein localises to the cell membrane. Its function is as follows. Component of the A-type ATP synthase that produces ATP from ADP in the presence of a proton gradient across the membrane. In Picrophilus torridus (strain ATCC 700027 / DSM 9790 / JCM 10055 / NBRC 100828 / KAW 2/3), this protein is A-type ATP synthase subunit E.